A 182-amino-acid chain; its full sequence is MFKWYVVQVFTAQEKKVKKSLEDFKEASGMSDFIQQIILPSENVMEVKKGEHKIVEKYIWPGYLLVKMHLTDESWSYVKKTQGVVEFLGGGAPVALSEEEVKNILADLEEKKSGVVQKHKFEVGSQVKINDGVFVNFVGVVSEVFHDKGRLSVMVSIFGRETRVDDLEFWQVEEVAPGQESE.

The protein belongs to the NusG family.

Functionally, participates in transcription elongation, termination and antitermination. The protein is Transcription termination/antitermination protein NusG of Chlamydia muridarum (strain MoPn / Nigg).